Reading from the N-terminus, the 201-residue chain is MINKAILGGTFDPIHNAHINVAYEALERFNLEEVIFIPAGNPPHKIKLKKTPAHIRYEMVKLAIEKETRFSISDFEIKSKGLSYTYRTLKHFKEKEPETNWYFITGEDCLSYLEHWKYIDEIFNICNFVIFSREGFKEKEEIIKKKKSILLKYRKEILFMDASILDISSTKIRNRIKEGKEVSFYMPDKVYKFILQNNLYK.

This sequence belongs to the NadD family.

The catalysed reaction is nicotinate beta-D-ribonucleotide + ATP + H(+) = deamido-NAD(+) + diphosphate. Its pathway is cofactor biosynthesis; NAD(+) biosynthesis; deamido-NAD(+) from nicotinate D-ribonucleotide: step 1/1. Catalyzes the reversible adenylation of nicotinate mononucleotide (NaMN) to nicotinic acid adenine dinucleotide (NaAD). The sequence is that of Probable nicotinate-nucleotide adenylyltransferase from Clostridium botulinum (strain ATCC 19397 / Type A).